The sequence spans 276 residues: Large ribosomal subunit protein uL2 (276 aa).

The interval 219–268 (TVRGSVMNPNDHPHGGGEGRQPVGRKSPMTPWGKPALGLKTRNKKAKSSK) is disordered.

It belongs to the universal ribosomal protein uL2 family. Part of the 50S ribosomal subunit. Forms a bridge to the 30S subunit in the 70S ribosome.

One of the primary rRNA binding proteins. Required for association of the 30S and 50S subunits to form the 70S ribosome, for tRNA binding and peptide bond formation. It has been suggested to have peptidyltransferase activity; this is somewhat controversial. Makes several contacts with the 16S rRNA in the 70S ribosome. This is Large ribosomal subunit protein uL2 from Lactococcus lactis subsp. cremoris (strain MG1363).